Here is a 206-residue protein sequence, read N- to C-terminus: Protein GrpE (206 aa).

This sequence belongs to the GrpE family. As to quaternary structure, homodimer.

It localises to the cytoplasm. In terms of biological role, participates actively in the response to hyperosmotic and heat shock by preventing the aggregation of stress-denatured proteins, in association with DnaK and GrpE. It is the nucleotide exchange factor for DnaK and may function as a thermosensor. Unfolded proteins bind initially to DnaJ; upon interaction with the DnaJ-bound protein, DnaK hydrolyzes its bound ATP, resulting in the formation of a stable complex. GrpE releases ADP from DnaK; ATP binding to DnaK triggers the release of the substrate protein, thus completing the reaction cycle. Several rounds of ATP-dependent interactions between DnaJ, DnaK and GrpE are required for fully efficient folding. The polypeptide is Protein GrpE (Shewanella baltica (strain OS223)).